The sequence spans 284 residues: 2-dehydro-3-deoxyphosphooctonate aldolase (284 aa).

It belongs to the KdsA family.

It localises to the cytoplasm. It catalyses the reaction D-arabinose 5-phosphate + phosphoenolpyruvate + H2O = 3-deoxy-alpha-D-manno-2-octulosonate-8-phosphate + phosphate. It functions in the pathway carbohydrate biosynthesis; 3-deoxy-D-manno-octulosonate biosynthesis; 3-deoxy-D-manno-octulosonate from D-ribulose 5-phosphate: step 2/3. It participates in bacterial outer membrane biogenesis; lipopolysaccharide biosynthesis. In Pseudoalteromonas translucida (strain TAC 125), this protein is 2-dehydro-3-deoxyphosphooctonate aldolase.